Reading from the N-terminus, the 333-residue chain is MQHNQLLEQLYSGHSLSTSESTALFNAVIQGELSNEQIAAMLIALKVRGANTEEISGAVAASLQNAKAFPYPNYPFADIVGTGGNGQNTINISTTSAIVAASMGAKIAKHGNRSVSSKSGASDVLTALSVNVNVTPEQARQALDEIGVCFLFAQQYHSGFRHVAPVRAALKTRTIFNILGPLINPARPTYHLLGVYAPELVKTYAETAVALEHQHSFVVHGSGLDEVALHGETQVAEIKNGKIEYFTLTPEDFGLKTQSLESLRGGEPQENAQYLTALLQGKGKAEHANAVAANTALLLKLFGYDDLKQNVQNVLAHLVSGKAFETLQKLTTY.

Residues glycine 81, 84–85, threonine 89, 91–94, 109–117, and alanine 121 each bind 5-phospho-alpha-D-ribose 1-diphosphate; these read GN, NIST, and KHGNRSVSS. Glycine 81 is a binding site for anthranilate. Serine 93 contributes to the Mg(2+) binding site. Asparagine 112 serves as a coordination point for anthranilate. Arginine 167 is a binding site for anthranilate. The Mg(2+) site is built by aspartate 225 and glutamate 226.

This sequence belongs to the anthranilate phosphoribosyltransferase family. Homodimer. Mg(2+) serves as cofactor.

It catalyses the reaction N-(5-phospho-beta-D-ribosyl)anthranilate + diphosphate = 5-phospho-alpha-D-ribose 1-diphosphate + anthranilate. The protein operates within amino-acid biosynthesis; L-tryptophan biosynthesis; L-tryptophan from chorismate: step 2/5. Functionally, catalyzes the transfer of the phosphoribosyl group of 5-phosphorylribose-1-pyrophosphate (PRPP) to anthranilate to yield N-(5'-phosphoribosyl)-anthranilate (PRA). This is Anthranilate phosphoribosyltransferase from Haemophilus influenzae (strain ATCC 51907 / DSM 11121 / KW20 / Rd).